The sequence spans 376 residues: Crh-like protein 4 (376 aa).

The N-terminal stretch at Met1 to Ala21 is a signal peptide. Residues Gln22 to Asn229 enclose the GH16 domain. A disulfide bridge connects residues Cys27 and Cys35. The active-site Nucleophile is Glu119. Glu123 acts as the Proton donor in catalysis. Chitin contacts are provided by Glu123, Lys202, Trp206, and Thr217. Residue Ser346 is the site of GPI-anchor amidated serine attachment. Residues Ala347–Pro376 constitute a propeptide, removed in mature form. Residue Asn351 is glycosylated (N-linked (GlcNAc...) asparagine).

This sequence belongs to the glycosyl hydrolase 16 family. CRH1 subfamily.

The protein resides in the cell membrane. It carries out the reaction Random endo-hydrolysis of N-acetyl-beta-D-glucosaminide (1-&gt;4)-beta-linkages in chitin and chitodextrins.. Dual chitinase/transglycosylase that plays a role in cell wall architecture. Chitinase and transglycosylase activities are coupled. Required for the polysaccharide cross-linking at the septa and the cell wall. More specifically, transfers chitin to 1,6-beta-glucan in the cell wall. The polypeptide is Crh-like protein 4 (Botryotinia fuckeliana (strain B05.10) (Noble rot fungus)).